Consider the following 351-residue polypeptide: Sesquiterpene synthase 14 (351 aa).

Mg(2+) is bound by residues aspartate 87, asparagine 223, serine 227, and glutamate 231. Positions 87 to 91 (DEYTD) match the DDXXD motif motif. The NSE/DTE motif signature appears at 223–231 (NDIASYNKE). Positions 312 and 313 each coordinate (2E,6E)-farnesyl diphosphate.

Belongs to the terpene synthase family. Mg(2+) is required as a cofactor.

The catalysed reaction is (2E,6E)-farnesyl diphosphate = pentalenene + diphosphate. Terpene cyclase that catalyzes the cyclization of farnesyl diphosphate (FPP) to pentalenene as a major product, as well as caryophyllene. The sequence is that of Sesquiterpene synthase 14 from Postia placenta (strain ATCC 44394 / Madison 698-R) (Brown rot fungus).